Consider the following 417-residue polypeptide: MFSRDVRLETYDPELAKAIAAEAGRQEDHVELIASENYCSQLVMEAQGSQLTNKYAEGYPGKRYYGGCAFVDIAEQLAIDRIKQVFDADYANVQPHSGSQANQAVYLALLQPGDTILGMSLAHGGHLTHGAKANVSGKLFNAVQYGVNEQGLIDYDEVQRLATEHTPKMVVAGFSAYSQKIDWARFRAIADSVGAYLFVDMAHIAGLVAAGVYPSPMEHAHVVTSTTHKTLRGPRGGIIVAKGASEELQKKLQSIVFPGIQGGPLMHVIAAKAVAFKEALEPAFKTYQQQVVKNAQAMANTLIARGYKIVSGGTENHLMLVDMIGRDVSGKDAEAALGKAHITVNKNAVPNDPRSPFVTSGLRLGTPAITTRGYKEPDSIDLANWIADVLDAPTDEAVLAKVRDAVTAQCKRYPVYG.

(6S)-5,6,7,8-tetrahydrofolate-binding positions include Leu-121 and 125–127 (GHL). An N6-(pyridoxal phosphate)lysine modification is found at Lys-229. (6S)-5,6,7,8-tetrahydrofolate is bound at residue 355-357 (SPF).

It belongs to the SHMT family. In terms of assembly, homodimer. Pyridoxal 5'-phosphate serves as cofactor.

Its subcellular location is the cytoplasm. It catalyses the reaction (6R)-5,10-methylene-5,6,7,8-tetrahydrofolate + glycine + H2O = (6S)-5,6,7,8-tetrahydrofolate + L-serine. It participates in one-carbon metabolism; tetrahydrofolate interconversion. Its pathway is amino-acid biosynthesis; glycine biosynthesis; glycine from L-serine: step 1/1. Catalyzes the reversible interconversion of serine and glycine with tetrahydrofolate (THF) serving as the one-carbon carrier. This reaction serves as the major source of one-carbon groups required for the biosynthesis of purines, thymidylate, methionine, and other important biomolecules. Also exhibits THF-independent aldolase activity toward beta-hydroxyamino acids, producing glycine and aldehydes, via a retro-aldol mechanism. In Xanthomonas oryzae pv. oryzae (strain MAFF 311018), this protein is Serine hydroxymethyltransferase.